The following is a 497-amino-acid chain: Probable D-lactate dehydrogenase, mitochondrial (497 aa).

In terms of domain architecture, FAD-binding PCMH-type spans 65–246 (HRCRPPDVVV…TKATLRLYGV (182 aa)).

Belongs to the FAD-binding oxidoreductase/transferase type 4 family. Requires FAD as cofactor.

It localises to the mitochondrion. The catalysed reaction is (R)-lactate + 2 Fe(III)-[cytochrome c] = 2 Fe(II)-[cytochrome c] + pyruvate + 2 H(+). In terms of biological role, involved in D-lactate, but not L-lactate catabolic process. The polypeptide is Probable D-lactate dehydrogenase, mitochondrial (ldhd) (Danio rerio (Zebrafish)).